We begin with the raw amino-acid sequence, 113 residues long: Large ribosomal subunit protein uL24 (113 aa).

It belongs to the universal ribosomal protein uL24 family. As to quaternary structure, part of the 50S ribosomal subunit.

Its function is as follows. One of two assembly initiator proteins, it binds directly to the 5'-end of the 23S rRNA, where it nucleates assembly of the 50S subunit. One of the proteins that surrounds the polypeptide exit tunnel on the outside of the subunit. The sequence is that of Large ribosomal subunit protein uL24 (rplX) from Fusobacterium nucleatum subsp. nucleatum (strain ATCC 25586 / DSM 15643 / BCRC 10681 / CIP 101130 / JCM 8532 / KCTC 2640 / LMG 13131 / VPI 4355).